The following is a 97-amino-acid chain: Small ribosomal subunit protein bS20 (97 aa).

Belongs to the bacterial ribosomal protein bS20 family.

In terms of biological role, binds directly to 16S ribosomal RNA. The protein is Small ribosomal subunit protein bS20 of Synechocystis sp. (strain ATCC 27184 / PCC 6803 / Kazusa).